The chain runs to 425 residues: Serine--tRNA ligase (425 aa).

An L-serine-binding site is contributed by 230–232 (TSE). ATP contacts are provided by residues 261 to 263 (RRE) and V277. E284 lines the L-serine pocket. 348 to 351 (ELTS) is a binding site for ATP. T382 contributes to the L-serine binding site.

Belongs to the class-II aminoacyl-tRNA synthetase family. Type-1 seryl-tRNA synthetase subfamily. Homodimer. The tRNA molecule binds across the dimer.

The protein localises to the cytoplasm. It carries out the reaction tRNA(Ser) + L-serine + ATP = L-seryl-tRNA(Ser) + AMP + diphosphate + H(+). It catalyses the reaction tRNA(Sec) + L-serine + ATP = L-seryl-tRNA(Sec) + AMP + diphosphate + H(+). Its pathway is aminoacyl-tRNA biosynthesis; selenocysteinyl-tRNA(Sec) biosynthesis; L-seryl-tRNA(Sec) from L-serine and tRNA(Sec): step 1/1. Catalyzes the attachment of serine to tRNA(Ser). Is also able to aminoacylate tRNA(Sec) with serine, to form the misacylated tRNA L-seryl-tRNA(Sec), which will be further converted into selenocysteinyl-tRNA(Sec). The protein is Serine--tRNA ligase of Streptomyces coelicolor (strain ATCC BAA-471 / A3(2) / M145).